Here is a 522-residue protein sequence, read N- to C-terminus: Target of rapamycin complex 2 subunit MAPKAP1 (522 aa).

The residue at position 2 (Ala2) is an N-acetylalanine. Residues 2–184 (AFLDNPTIIL…KKIDVYLPLH (183 aa)) form an interaction with MAP3K2 region. Residues 2–267 (AFLDNPTIIL…GFSTLALVEK (266 aa)) form an interaction with NBN region. A Phosphothreonine modification is found at Thr86. 4 positions are modified to phosphoserine: Ser128, Ser186, Ser315, and Ser356. In terms of domain architecture, CRIM spans 139 to 267 (QSILSVRLEQ…GFSTLALVEK (129 aa)). Residues 279-353 (LFVRINAAHG…QSAWEFCLVR (75 aa)) are SIN1-type RBD. The 106-residue stretch at 382-487 (HYKSFKVSMI…IVLKVNYILE (106 aa)) folds into the SIN1-type PH domain. Position 393 (Arg393) interacts with a 1,2-diacyl-sn-glycero-3-phospho-(1D-myo-inositol-3,4,5-trisphosphate). Thr398 is subject to Phosphothreonine. Residues Lys428 and Lys464 each contribute to the a 1,2-diacyl-sn-glycero-3-phospho-(1D-myo-inositol-3,4,5-trisphosphate) site. An interaction with ATF2 region spans residues 468 to 522 (FESDAATVNEIVLKVNYILESRASTARADYFAQKQRKLNRRTSFSFQKEKKSGQQ). Ser510 carries the post-translational modification Phosphoserine.

It belongs to the SIN1 family. Component of the mechanistic target of rapamycin complex 2 (mTORC2), consisting in two heterotretramers composed of MTOR, MLST8, RICTOR and MAPKAP1/SIN1. The mTORC2 core complex associates with PRR5/PROTOR1 and/or PRR5L/PROTOR2. Contrary to mTORC1, mTORC2 does not bind to and is not sensitive to FKBP12-rapamycin. Interacts with MAP3K2. Interacts with ATF2. Interacts with MAPK8. Interacts with GTP-bound HRAS and KRAS; inhibiting their activity. Interacts with IFNAR2. As to quaternary structure, interacts with CCDC28B. In terms of assembly, interacts with NBN. Phosphorylation at Ser-128 by PKC promotes relocalization to the perinuclear region, where the mTORC2 complex specifically mediates phosphorylation of SGK1. Phosphorylated at Thr-86 by AKT1 or RPS6KB1 in the presence of growth factors; the effect of this phosphorylation is however unclear. According to two studies, phosphorylation at Thr-86 by AKT1 is part of a positive feedback loop that increases mTORC2 activation. According to another study, phosphorylation at Thr-86 and Thr-398 by RPS6KB1 promotes dissociation from the mTORC2 complex, leading to inhibit mTORC2 signaling. In terms of tissue distribution, ubiquitously expressed, with highest levels in heart and skeletal muscle.

It is found in the cell membrane. Its subcellular location is the endoplasmic reticulum membrane. The protein localises to the early endosome membrane. It localises to the late endosome membrane. The protein resides in the lysosome membrane. It is found in the golgi apparatus membrane. Its subcellular location is the mitochondrion outer membrane. The protein localises to the cytoplasm. It localises to the perinuclear region. The protein resides in the nucleus. It is found in the cytosol. Phosphatidylinositol 3,4,5-trisphosphate (PI(3,4,5)P3) promotes MTOR activation by relieving MAPKAP1/SIN1-mediated inhibition of MTOR that takes place in absence of PI(3,4,5)P3. Its function is as follows. Component of the mechanistic target of rapamycin complex 2 (mTORC2), which transduces signals from growth factors to pathways involved in proliferation, cytoskeletal organization, lipogenesis and anabolic output. In response to growth factors, mTORC2 phosphorylates and activates AGC protein kinase family members, including AKT (AKT1, AKT2 and AKT3), PKC (PRKCA, PRKCB and PRKCE) and SGK1. In contrast to mTORC1, mTORC2 is nutrient-insensitive. Within the mTORC2 complex, MAPKAP1/SIN1 acts as a substrate adapter which recognizes and binds AGC protein kinase family members for phosphorylation by MTOR. mTORC2 plays a critical role in AKT1 activation by mediating phosphorylation of different sites depending on the context, such as 'Thr-450', 'Ser-473', 'Ser-477' or 'Thr-479', facilitating the phosphorylation of the activation loop of AKT1 on 'Thr-308' by PDPK1/PDK1 which is a prerequisite for full activation. mTORC2 catalyzes the phosphorylation of SGK1 at 'Ser-422' and of PRKCA on 'Ser-657'. The mTORC2 complex also phosphorylates various proteins involved in insulin signaling, such as FBXW8 and IGF2BP1. mTORC2 acts upstream of Rho GTPases to regulate the actin cytoskeleton, probably by activating one or more Rho-type guanine nucleotide exchange factors. mTORC2 promotes the serum-induced formation of stress-fibers or F-actin. MAPKAP1 inhibits MAP3K2 by preventing its dimerization and autophosphorylation. Inhibits HRAS and KRAS independently of mTORC2 complex. Enhances osmotic stress-induced phosphorylation of ATF2 and ATF2-mediated transcription. Involved in ciliogenesis, regulates cilia length through its interaction with CCDC28B independently of mTORC2 complex. In terms of biological role, in contrast to isoform 1, isoform 2 and isoform 6, isoform 4 is not a component of the a mTORC2 complex. This Homo sapiens (Human) protein is Target of rapamycin complex 2 subunit MAPKAP1.